The primary structure comprises 455 residues: 3-phosphoshikimate 1-carboxyvinyltransferase (455 aa).

Positions 1-19 (MSHGASSRPATARKSSGLS) are enriched in polar residues. A disordered region spans residues 1-25 (MSHGASSRPATARKSSGLSGTVRIP). Residue K28 participates in phosphoenolpyruvate binding. 3-phosphoshikimate-binding residues include S29 and R33. Phosphoenolpyruvate is bound at residue R128. 3-phosphoshikimate-binding residues include S173, A174, Q175, D326, and K353. Q175 is a phosphoenolpyruvate binding site. Residue D326 is the Proton acceptor of the active site. R357 and R405 together coordinate phosphoenolpyruvate.

Belongs to the EPSP synthase family. In terms of assembly, monomer.

The protein resides in the cytoplasm. The enzyme catalyses 3-phosphoshikimate + phosphoenolpyruvate = 5-O-(1-carboxyvinyl)-3-phosphoshikimate + phosphate. The protein operates within metabolic intermediate biosynthesis; chorismate biosynthesis; chorismate from D-erythrose 4-phosphate and phosphoenolpyruvate: step 6/7. Is resistant to inhibition by glyphosate (glyphosate-tolerant) like other members of class II EPSPS, in contrast to class I EPSPS, which is glyphosate-sensitive. Is much less sensitive to inhibition by the (R)-difluoromethyl and (R)-phosphonate analogs of the tetrahedral reaction intermediate than the representative class I EPSPS from E.coli. Is highly activated in the presence of cations, such as NH4(+), Rb(+), and K(+). Functionally, catalyzes the transfer of the enolpyruvyl moiety of phosphoenolpyruvate (PEP) to the 5-hydroxyl of shikimate-3-phosphate (S3P) to produce enolpyruvyl shikimate-3-phosphate and inorganic phosphate. The sequence is that of 3-phosphoshikimate 1-carboxyvinyltransferase from Agrobacterium sp. (strain CP4).